Reading from the N-terminus, the 164-residue chain is MPLLDSFKVDHTKMPAPAVRLAKVMKTPKGDDISVFDLRFCVPNKDIMSEKGTHTLEHLFAGFMREHLNSNAVEIIDISPMGCRTGFYMSLIGTPDEKSVVKAWENSMQDVLKVKSQEDIPELNIYQCGSCKLHSLDEAKQIAQKVLNSGIGVMNNAELKLENL.

Fe cation is bound by residues H54, H58, and C128.

Belongs to the LuxS family. As to quaternary structure, homodimer. Fe cation is required as a cofactor.

The enzyme catalyses S-(5-deoxy-D-ribos-5-yl)-L-homocysteine = (S)-4,5-dihydroxypentane-2,3-dione + L-homocysteine. Functionally, involved in the synthesis of autoinducer 2 (AI-2) which is secreted by bacteria and is used to communicate both the cell density and the metabolic potential of the environment. The regulation of gene expression in response to changes in cell density is called quorum sensing. Catalyzes the transformation of S-ribosylhomocysteine (RHC) to homocysteine (HC) and 4,5-dihydroxy-2,3-pentadione (DPD). In Campylobacter jejuni subsp. doylei (strain ATCC BAA-1458 / RM4099 / 269.97), this protein is S-ribosylhomocysteine lyase.